The sequence spans 242 residues: Venom nerve growth factor (242 aa).

The first 18 residues, 1-18 (MSMMCYTLIIAFLIGIWA), serve as a signal peptide directing secretion. A propeptide spanning residues 19–125 (APKSEDNVPL…TLNRNIRAKR (107 aa)) is cleaved from the precursor. Over residues 47–66 (GLKTSRNTDQRHPAPKKAED) the composition is skewed to basic and acidic residues. Residues 47 to 70 (GLKTSRNTDQRHPAPKKAEDQELG) are disordered. 3 cysteine pairs are disulfide-bonded: cysteine 139–cysteine 203, cysteine 181–cysteine 231, and cysteine 191–cysteine 233. Asparagine 166 is a glycosylation site (N-linked (GlcNAc...) asparagine).

It belongs to the NGF-beta family. As to quaternary structure, homodimer; non-covalently linked. Expressed by the venom gland.

The protein resides in the secreted. In terms of biological role, nerve growth factor is important for the development and maintenance of the sympathetic and sensory nervous systems. It stimulates division and differentiation of sympathetic and embryonic sensory neurons as well as basal forebrain cholinergic neurons in the brain. Its relevance in the snake venom is not clear. However, it has been shown to inhibit metalloproteinase-dependent proteolysis of platelet glycoprotein Ib alpha, suggesting a metalloproteinase inhibition to prevent metalloprotease autodigestion and/or protection against prey proteases. Binds a lipid between the two protein chains in the homodimer. The lipid-bound form promotes histamine relase from mouse mast cells, contrary to the lipid-free form. The chain is Venom nerve growth factor from Drysdalia coronoides (White-lipped snake).